The sequence spans 307 residues: Mycothiol acetyltransferase (307 aa).

2 N-acetyltransferase domains span residues 15–158 (HTLD…LAEP) and 164–307 (VTVR…RTES). Glutamate 46 contacts 1D-myo-inositol 2-(L-cysteinylamino)-2-deoxy-alpha-D-glucopyranoside. Acetyl-CoA is bound at residue 90 to 92 (LVV). Glutamate 191, lysine 230, and glutamate 239 together coordinate 1D-myo-inositol 2-(L-cysteinylamino)-2-deoxy-alpha-D-glucopyranoside. Residues 243 to 245 (VGV) and 250 to 256 (QGGGLGK) each bind acetyl-CoA. Residue tyrosine 277 coordinates 1D-myo-inositol 2-(L-cysteinylamino)-2-deoxy-alpha-D-glucopyranoside.

Belongs to the acetyltransferase family. MshD subfamily. Monomer.

It carries out the reaction 1D-myo-inositol 2-(L-cysteinylamino)-2-deoxy-alpha-D-glucopyranoside + acetyl-CoA = mycothiol + CoA + H(+). In terms of biological role, catalyzes the transfer of acetyl from acetyl-CoA to desacetylmycothiol (Cys-GlcN-Ins) to form mycothiol. This Streptomyces griseus subsp. griseus (strain JCM 4626 / CBS 651.72 / NBRC 13350 / KCC S-0626 / ISP 5235) protein is Mycothiol acetyltransferase.